A 369-amino-acid polypeptide reads, in one-letter code: Iron-sulfur cluster carrier protein (369 aa).

ATP is bound at residue 115–122 (GKGGVGKS).

This sequence belongs to the Mrp/NBP35 ATP-binding proteins family. In terms of assembly, homodimer. Holo-ApbC forms a mixture of homodimers and homotetramers.

In terms of biological role, binds and transfers iron-sulfur (Fe-S) clusters to target apoproteins. Can hydrolyze ATP. Both activities are required for function in vivo, but the ability to hydrolyze ATP is not necessary for Fe-S cluster transfer. In Salmonella typhimurium (strain LT2 / SGSC1412 / ATCC 700720), this protein is Iron-sulfur cluster carrier protein.